The sequence spans 93 residues: Parbolysin P4 (93 aa).

3 cysteine pairs are disulfide-bonded: cysteine 16/cysteine 37, cysteine 22/cysteine 33, and cysteine 47/cysteine 60.

The protein belongs to the worm cytolysin family. Localized within the skin and proboscis and are most readily isolated from body mucus secretions.

It is found in the secreted. Functionally, cytolysin that shows hemolytic activity (on bovine erythrocytes, HC(50)=5.75 mg/ml). This hemolytic activity is completely inhibited by small unilamelar vesicles composed of PC/PG, PC/PI and PC/PS in 1:1 molar ratios (with at least 100 mg/ml concentration). This Parborlasia corrugatus (Antarctic nemertean worm) protein is Parbolysin P4.